Reading from the N-terminus, the 166-residue chain is Large ribosomal subunit protein uL10 (166 aa).

This sequence belongs to the universal ribosomal protein uL10 family. In terms of assembly, part of the ribosomal stalk of the 50S ribosomal subunit. The N-terminus interacts with L11 and the large rRNA to form the base of the stalk. The C-terminus forms an elongated spine to which L12 dimers bind in a sequential fashion forming a multimeric L10(L12)X complex.

Its function is as follows. Forms part of the ribosomal stalk, playing a central role in the interaction of the ribosome with GTP-bound translation factors. The chain is Large ribosomal subunit protein uL10 from Streptococcus pneumoniae (strain ATCC 700669 / Spain 23F-1).